A 1480-amino-acid chain; its full sequence is Nonribosomal peptide synthetase inpA (1480 aa).

The segment covering 1 to 17 has biased composition (low complexity); it reads MSHSMSSSSSSSSSSSS. Positions 1–24 are disordered; the sequence is MSHSMSSSSSSSSSSSSSRDEGQS. The segment at 44-458 is condensation; the sequence is VQDVYPCTPL…QLISPQDLDQ (415 aa). An adenylation region spans residues 479–871; that stretch reads QRHIDTRPDA…GRKDSQVKIR (393 aa). The Carrier domain occupies 1003–1082; the sequence is DSTNKVALRL…GLAAMITSPH (80 aa). S1041 carries the post-translational modification O-(pantetheine 4'-phosphoryl)serine. The thioesterase (TE) domain stretch occupies residues 1117–1436; it reads KVFLTGATGL…VLAMLQDPQM (320 aa).

It belongs to the NRP synthetase family.

It participates in secondary metabolite biosynthesis. Functionally, nonribosomal peptide synthetase; part of the inp gene cluster that mediates the biosynthesis of fellutamide B, a mycotoxin that acts as a proteasome inhibitor. In the first step of fellutabmide B biosynthesis, inpC activates 3-hydroxydodecanoic acid to generate 3-hydroxydodecanoyl-AMP that is then loaded onto the T0 domain of inpB. The 3-hydroxydodecanoyl-S-phosphopantetheinyl-T0 is sequentially extended with L-Asn and L-Gln by the two CAT modules of inpB. The linear lipodipeptide from inpB is then transferred onto inpA for the addition of the third amino acid, L-Leu. Reductive releasing of the lipotripeptide by the TE domain of inpA produces (2S)-fellutamide B. InpF might be involved in the release and transfer of the lipodipeptide from inpB to inpA. The inp cluster-encoded proteasome subunit inpE confers resistance to internally produced fellutamides. The MFS efflux transporter inpD may contribute to fellutamide resistance as well. This is Nonribosomal peptide synthetase inpA from Emericella nidulans (strain FGSC A4 / ATCC 38163 / CBS 112.46 / NRRL 194 / M139) (Aspergillus nidulans).